The chain runs to 111 residues: WAP four-disulfide core domain protein 12 (111 aa).

Residues 1-23 form the signal peptide; the sequence is MGSSSFLVLMVSLTLVTLVAVEG. Residues 27-74 form the WAP domain; sequence DIEKAGVCPADNVRCFKSDPPQCHTDQDCLGERKCCYLHCGFKCVIPV. 4 disulfide bridges follow: Cys-34-Cys-62, Cys-41-Cys-66, Cys-49-Cys-61, and Cys-55-Cys-70. The tract at residues 80-111 is disordered; it reads GGNKDEDVSRPYPEPGWEAKCPGSSSTRCPQK. Residues 102–111 show a composition bias toward polar residues; that stretch reads GSSSTRCPQK.

Its subcellular location is the secreted. Its function is as follows. Antibacterial protein. Putative acid-stable proteinase inhibitor. This is WAP four-disulfide core domain protein 12 (WFDC12) from Pan troglodytes (Chimpanzee).